The primary structure comprises 91 residues: MANNPGAKKAIRKIARRTEVNTARRSRVRTFLRKFEDALAAGDAAVAKAAFIEAQSELMRAVSKGVVHPNTGSRKVSRLAARLKKLDQAAA.

Belongs to the bacterial ribosomal protein bS20 family.

Its function is as follows. Binds directly to 16S ribosomal RNA. This chain is Small ribosomal subunit protein bS20, found in Caulobacter sp. (strain K31).